A 66-amino-acid chain; its full sequence is MEVDVPGVDGRDGLRERRGLSEGGRQNLDVRPQSGANGLPKHSYWLDLWLFIFFDVVVFLFVYFLP.

An N-acetylmethionine modification is found at methionine 1. The tract at residues 1 to 38 (MEVDVPGVDGRDGLRERRGLSEGGRQNLDVRPQSGANG) is disordered. The span at 9–20 (DGRDGLRERRGL) shows a compositional bias: basic and acidic residues. A helical transmembrane segment spans residues 45–65 (WLDLWLFIFFDVVVFLFVYFL).

In terms of assembly, homooligomer. Can also form heterooligomers with other sarcoplasmic/endoplasmic reticulum calcium ATPase (SERCA) regulators ERLN, PLN, SLN and STRIT1/DWORF. Monomer. Interacts as a monomer with ATP2A2/SERCA2; the interaction results in inhibition of ATP2A2 Ca(2+) affinity.

Its subcellular location is the endoplasmic reticulum membrane. Inhibits the activity of the calcium ATPases ATP2A2/SERCA2 and ATP2A3/SERCA3 by decreasing their apparent affinity for Ca(2+). The protein is Sarcoplasmic/endoplasmic reticulum calcium ATPase regulator ARLN (ARLN) of Pongo abelii (Sumatran orangutan).